Consider the following 482-residue polypeptide: tRNA sulfurtransferase (482 aa).

The THUMP domain maps to 61 to 165 (LAIRDALTRI…DDRLLLIKGR (105 aa)). Residues 183-184 (LI), Lys265, Gly287, and Gln296 contribute to the ATP site. Residues Cys344 and Cys456 are joined by a disulfide bond. The region spanning 404 to 482 (FGPNDVILDI…GFANVKVYRP (79 aa)) is the Rhodanese domain. Cys456 (cysteine persulfide intermediate) is an active-site residue.

Belongs to the ThiI family.

The protein localises to the cytoplasm. It carries out the reaction [ThiI sulfur-carrier protein]-S-sulfanyl-L-cysteine + a uridine in tRNA + 2 reduced [2Fe-2S]-[ferredoxin] + ATP + H(+) = [ThiI sulfur-carrier protein]-L-cysteine + a 4-thiouridine in tRNA + 2 oxidized [2Fe-2S]-[ferredoxin] + AMP + diphosphate. The catalysed reaction is [ThiS sulfur-carrier protein]-C-terminal Gly-Gly-AMP + S-sulfanyl-L-cysteinyl-[cysteine desulfurase] + AH2 = [ThiS sulfur-carrier protein]-C-terminal-Gly-aminoethanethioate + L-cysteinyl-[cysteine desulfurase] + A + AMP + 2 H(+). Its pathway is cofactor biosynthesis; thiamine diphosphate biosynthesis. Functionally, catalyzes the ATP-dependent transfer of a sulfur to tRNA to produce 4-thiouridine in position 8 of tRNAs, which functions as a near-UV photosensor. Also catalyzes the transfer of sulfur to the sulfur carrier protein ThiS, forming ThiS-thiocarboxylate. This is a step in the synthesis of thiazole, in the thiamine biosynthesis pathway. The sulfur is donated as persulfide by IscS. This chain is tRNA sulfurtransferase, found in Salmonella heidelberg (strain SL476).